The following is a 908-amino-acid chain: E3 ubiquitin-protein ligase ZNF598 (908 aa).

The RING-type zinc finger occupies 27–67; sequence CVLCCGDLEATALGRCDHPVCYRCSTKMRVLCEQRYCAVCR. The segment at 185–208 adopts a C2H2-type zinc-finger fold; it reads PLCKFCDERYLDNDELLKHLRRDH. Disordered stretches follow at residues 292–338, 350–441, 467–557, 569–619, and 719–744; these read SRRS…KREE, SVAA…EEDF, PGPP…TVQG, SLLA…LEAP, and PSSH…TPGL. Ser-295 carries the phosphoserine modification. Tyr-304 carries the phosphotyrosine modification. Over residues 313–329 the composition is skewed to low complexity; sequence QGRAGRASGRGAQQNRR. Over residues 358–385 the composition is skewed to basic and acidic residues; the sequence is ETQRVEDREEGSRPKKEEAAARVPEEPR. Position 433 is a phosphoserine (Ser-433). The segment covering 482 to 501 has biased composition (low complexity); sequence PALVSSAPKPSSAPSSLISA. Residues 529 to 538 show a composition bias toward basic residues; the sequence is KAGKGSRGGR.

Belongs to the ZNF598/HEL2 family. Interacts with the E2 ubiquitin-conjugating enzyme UBE2D3. Component of the 4EHP-GYF2 complex, at least composed of EIF4E2, GIGYF2 and ZNF598.

Its subcellular location is the cytoplasm. The protein resides in the cytosol. The enzyme catalyses S-ubiquitinyl-[E2 ubiquitin-conjugating enzyme]-L-cysteine + [acceptor protein]-L-lysine = [E2 ubiquitin-conjugating enzyme]-L-cysteine + N(6)-ubiquitinyl-[acceptor protein]-L-lysine.. Its pathway is protein modification; protein ubiquitination. Its function is as follows. E3 ubiquitin-protein ligase that plays a key role in the ribosome quality control (RQC), a pathway that takes place when a ribosome has stalled during translation, leading to degradation of nascent peptide chains. ZNF598 is activated when ribosomes are stalled within an mRNA following translation of prematurely polyadenylated mRNAs. Acts as a ribosome collision sensor: specifically recognizes and binds collided di-ribosome, which arises when a trailing ribosome encounters a slower leading ribosome, leading to terminally arrest translation. Following binding to colliding ribosomes, mediates monoubiquitination of 40S ribosomal proteins RPS10/eS10 and RPS3/uS3, and 'Lys-63'-linked polyubiquitination of RPS20/uS10. Polyubiquitination of RPS20/uS10 promotes recruitment of the RQT (ribosome quality control trigger) complex, which drives the disassembly of stalled ribosomes, followed by degradation of nascent peptides. E3 ubiquitin-protein ligase activity is dependent on the E2 ubiquitin-conjugating enzyme UBE2D3. Also acts as an adapter that recruits the 4EHP-GYF2 complex to mRNAs. Independently of its role in RQC, may also act as a negative regulator of interferon-stimulated gene (ISG) expression. This chain is E3 ubiquitin-protein ligase ZNF598, found in Mus musculus (Mouse).